The sequence spans 296 residues: NADH-cytochrome b5 reductase 1 (296 aa).

The helical transmembrane segment at 11–31 (LSAVLVKFAPFAVAVIAILAA) threads the bilayer. Residues 47-152 (SEFQNFVLKE…RGPKGAMVYT (106 aa)) form the FAD-binding FR-type domain. Residues 132 to 147 (TTLKIGDTLKVRGPKG) and 158 to 195 (HIGMIAGGTGITPMLQIIKAIIRNRPRNGGNDTTKIDL) each bind FAD.

Belongs to the flavoprotein pyridine nucleotide cytochrome reductase family. As to quaternary structure, monomer. Component of the 2-(3-amino-3-carboxypropyl)histidine synthase complex composed of dph1, dph2, dph3 and a NADH-dependent reductase, predominantly cbr1. The cofactor is FAD.

It localises to the mitochondrion outer membrane. It catalyses the reaction 2 Fe(III)-[cytochrome b5] + NADH = 2 Fe(II)-[cytochrome b5] + NAD(+) + H(+). It carries out the reaction 2 Fe(3+)-[Dph3] + NADH = 2 Fe(2+)-[Dph3] + NAD(+) + H(+). Its pathway is protein modification; peptidyl-diphthamide biosynthesis. NADH-dependent reductase for dph3 and cytochrome b5. Required for the first step of diphthamide biosynthesis, a post-translational modification of histidine which occurs in elongation factor 2. Dph1 and dph2 transfer a 3-amino-3-carboxypropyl (ACP) group from S-adenosyl-L-methionine (SAM) to a histidine residue, the reaction is assisted by a reduction system comprising dph3 and a NADH-dependent reductase, predominantly cbr1. By reducing dph3, also involved in the formation of the tRNA wobble base modification mcm5s 2U (5-methoxycarbonylmethyl-2-thiouridine), mediated by the elongator complex. The cytochrome b5/NADH cytochrome b5 reductase electron transfer system supports the catalytic activity of several sterol biosynthetic enzymes. The protein is NADH-cytochrome b5 reductase 1 (cbr1) of Aspergillus terreus (strain NIH 2624 / FGSC A1156).